The sequence spans 189 residues: FUN14 domain-containing protein 2 (189 aa).

The Cytoplasmic portion of the chain corresponds to Met-1 to Lys-80. Phosphoserine is present on residues Ser-10 and Ser-53. Residues Tyr-81–Phe-101 form a helical membrane-spanning segment. Topologically, residues Gln-102 to Leu-107 are mitochondrial intermembrane. Residues Ala-108–Ile-128 form a helical membrane-spanning segment. The Cytoplasmic segment spans residues Lys-129–Glu-164. Position 151 is a phosphoserine (Ser-151). The chain crosses the membrane as a helical span at residues Val-165–Leu-185. The Mitochondrial intermembrane portion of the chain corresponds to Gly-186 to Ser-189.

Belongs to the FUN14 family. Highly expressed in platelets (at protein level).

It is found in the mitochondrion outer membrane. The protein localises to the nucleus. In terms of biological role, binds directly and specifically 1,2-Diacyl-sn-glycero-3-phospho-(1'-myo-inositol-3',4',5'-bisphosphate) (PIP3) leading to the recruitment of PIP3 to mitochondria and may play a role in the regulation of the platelet activation via AKT/GSK3B/cGMP signaling pathways. May act as transcription factor that regulates SREBP1 (isoform SREBP-1C) expression in order to modulate triglyceride (TG) homeostasis in hepatocytes. The sequence is that of FUN14 domain-containing protein 2 from Homo sapiens (Human).